The chain runs to 558 residues: uncharacterized protein (558 aa).

Transmembrane regions (helical) follow at residues 21 to 41 (IFCF…LPIA), 69 to 89 (FLDA…STVV), 100 to 120 (IVLA…AFLA), 160 to 180 (IIFL…LFYF), 220 to 240 (AFQA…IDLI), 251 to 271 (GLGI…GIGY), 303 to 323 (VITN…VEFI), 386 to 406 (VFPV…AMFI), 413 to 433 (TAGG…VAKF), 454 to 474 (AFLV…LLPL), 479 to 499 (PVSF…VGLS), and 519 to 539 (ALCL…LTFV).

This sequence belongs to the TrkH potassium transport family.

It localises to the cell membrane. This is an uncharacterized protein from Mycoplasma genitalium (strain ATCC 33530 / DSM 19775 / NCTC 10195 / G37) (Mycoplasmoides genitalium).